The following is a 243-amino-acid chain: Small ribosomal subunit protein uS3 (243 aa).

A2 is modified (N-acetylalanine). A phosphoserine mark is found at S6 and S35. The region spanning 21 to 92 is the KH type-2 domain; the sequence is LNEFLTRELA…SVELYAEKVA (72 aa). T42 bears the Phosphothreonine mark. K62 is modified (N6-acetyllysine). An asymmetric dimethylarginine mark is found at R64, R65, and R67. T70 carries the post-translational modification Phosphothreonine. Residue K90 forms a Glycyl lysine isopeptide (Lys-Gly) (interchain with G-Cter in ubiquitin) linkage. S104 is modified (phosphoserine). K132 carries the post-translational modification N6-succinyllysine. The tract at residues 200–243 is disordered; sequence PKKPLPDHVSIVEPKDEILPTTPISEQKGGKPEPPAMPQPVPTA. Residue K202 forms a Glycyl lysine isopeptide (Lys-Gly) (interchain with G-Cter in ubiquitin) linkage. A Phosphoserine modification is found at S209. Residue K214 forms a Glycyl lysine isopeptide (Lys-Gly) (interchain with G-Cter in SUMO2); alternate linkage. K214 participates in a covalent cross-link: Glycyl lysine isopeptide (Lys-Gly) (interchain with G-Cter in ubiquitin); alternate. T220 and T221 each carry phosphothreonine. A Phosphoserine modification is found at S224. K230 participates in a covalent cross-link: Glycyl lysine isopeptide (Lys-Gly) (interchain with G-Cter in SUMO2). Residues 231–243 are compositionally biased toward pro residues; the sequence is PEPPAMPQPVPTA. The residue at position 242 (T242) is a Phosphothreonine.

This sequence belongs to the universal ribosomal protein uS3 family. Component of the 40S small ribosomal subunit. Identified in a IGF2BP1-dependent mRNP granule complex containing untranslated mRNAs. Interacts with HNRPD. Interacts with PRMT1; the interaction methylates RPS3. Interacts with SUMO1; the interaction sumoylates RPS3. Interacts with UBC9. Interacts with CDK1; the interaction phosphorylates RPS3. Interacts with PRKCD; the interaction phosphorylates RPS3. Interacts with PKB/AKT; the interaction phosphorylates RPS3. Interacts with E2F1; the interaction occurs in the absence of nerve growth factor and increases transcription of pro-apoptotic proteins BCL2L11/BIM and HRK/Dp5. Interacts with the base excision repair proteins APEX1 and OGG1; interaction with OGG1 increases OGG1 N-glycosylase activity. Interacts with UNG; the interaction increases the uracil excision activity of UNG1. Interacts with HSP90; the interaction prevents the ubiquitination and proteasome-dependent degradation of RPS3 and is suppressed by increased ROS levels. Interacts with TOM70; the interaction promotes translocation of RPS3 to the mitochondrion. Interacts (via N-terminus) with RELA (via N-terminus); the interaction enhances the DNA-binding activity of the NF-kappa-B p65-p50 complex. Interacts with NFKBIA; the interaction is direct and may bridge the interaction between RPS3 and RELA. Interacts with IKKB; the interaction phosphorylates RPS3 and enhances its translocation to the nucleus. Interacts (via KH domain) with MDM2 and TP53. Interacts with TRADD. Interacts with ASCC3. Identified in a HCV IRES-mediated translation complex, at least composed of EIF3C, IGF2BP1, RPS3 and HCV RNA-replicon. Interacts with CRY1. Post-translationally, methylation by PRMT1 is required for import into the nucleolus and for ribosome assembly. Sumoylation by SUMO1 enhances protein stability through increased resistance to proteolysis. Sumoylation occurs at one or more of the three consensus sites, Lys-18, Lys-214 and Lys-230. In terms of processing, phosphorylation at Thr-221 by CDK1 occurs mainly in G2/M phase. Phosphorylation by PRKCD occurs on a non-ribosomal-associated form which results in translocation of RPS3 to the nucleus and enhances its endonuclease activity. Phosphorylated on Ser-209 by IKKB in response to activation of the NF-kappa-B p65-p50 complex which enhances the association of RPS3 with importin-alpha and mediates the nuclear translocation of RPS3. Phosphorylation by MAPK is required for translocation to the nucleus following exposure of cells to DNA damaging agents such as hydrogen peroxide. Phosphorylation by PKB/AKT mediates RPS3 nuclear translocation, enhances RPS3 endonuclease activity and suppresses RPS3-induced neuronal apoptosis. Post-translationally, ubiquitinated; ubiquitination is prevented by interaction with HSP90 which stabilizes the protein. Monoubiquitinated at Lys-214 by RNF10 and ZNF598 when a ribosome has stalled during translation of poly(A) sequences, leading to preclude synthesis of a long poly-lysine tail and initiate the ribosome quality control (RQC) pathway to degrade the potentially detrimental aberrant nascent polypeptide. Deubiquitinated at Lys-214 by USP10, preventing degradation by the proteasome and promoting 40S ribosome subunit recycling following ribosome dissociation. Ufmylated by UFL1.

Its subcellular location is the cytoplasm. It is found in the nucleus. The protein localises to the nucleolus. The protein resides in the mitochondrion inner membrane. It localises to the cytoskeleton. Its subcellular location is the spindle. The catalysed reaction is 2'-deoxyribonucleotide-(2'-deoxyribose 5'-phosphate)-2'-deoxyribonucleotide-DNA = a 3'-end 2'-deoxyribonucleotide-(2,3-dehydro-2,3-deoxyribose 5'-phosphate)-DNA + a 5'-end 5'-phospho-2'-deoxyribonucleoside-DNA + H(+). Its activity is regulated as follows. Endonuclease activity is inhibited by MgCl2 on apurinic/apyrimidinic DNA but not on UV-irradiated DNA. Component of the small ribosomal subunit. The ribosome is a large ribonucleoprotein complex responsible for the synthesis of proteins in the cell. Has endonuclease activity and plays a role in repair of damaged DNA. Cleaves phosphodiester bonds of DNAs containing altered bases with broad specificity and cleaves supercoiled DNA more efficiently than relaxed DNA. Displays high binding affinity for 7,8-dihydro-8-oxoguanine (8-oxoG), a common DNA lesion caused by reactive oxygen species (ROS). Has also been shown to bind with similar affinity to intact and damaged DNA. Stimulates the N-glycosylase activity of the base excision protein OGG1. Enhances the uracil excision activity of UNG1. Also stimulates the cleavage of the phosphodiester backbone by APEX1. When located in the mitochondrion, reduces cellular ROS levels and mitochondrial DNA damage. Has also been shown to negatively regulate DNA repair in cells exposed to hydrogen peroxide. Plays a role in regulating transcription as part of the NF-kappa-B p65-p50 complex where it binds to the RELA/p65 subunit, enhances binding of the complex to DNA and promotes transcription of target genes. Represses its own translation by binding to its cognate mRNA. Binds to and protects TP53/p53 from MDM2-mediated ubiquitination. Involved in spindle formation and chromosome movement during mitosis by regulating microtubule polymerization. Involved in induction of apoptosis through its role in activation of CASP8. Induces neuronal apoptosis by interacting with the E2F1 transcription factor and acting synergistically with it to up-regulate pro-apoptotic proteins BCL2L11/BIM and HRK/Dp5. Interacts with TRADD following exposure to UV radiation and induces apoptosis by caspase-dependent JNK activation. The chain is Small ribosomal subunit protein uS3 (RPS3) from Oryctolagus cuniculus (Rabbit).